We begin with the raw amino-acid sequence, 283 residues long: Thymidylate synthase (283 aa).

Arg22 lines the dUMP pocket. Catalysis depends on Cys160, which acts as the Nucleophile. DUMP is bound by residues 180–183, Asn191, and 221–223; these read RSCD and HIY. Asp183 provides a ligand contact to (6R)-5,10-methylene-5,6,7,8-tetrahydrofolate. Ser282 lines the (6R)-5,10-methylene-5,6,7,8-tetrahydrofolate pocket.

Belongs to the thymidylate synthase family. Bacterial-type ThyA subfamily. As to quaternary structure, homodimer.

The protein resides in the cytoplasm. The catalysed reaction is dUMP + (6R)-5,10-methylene-5,6,7,8-tetrahydrofolate = 7,8-dihydrofolate + dTMP. It participates in pyrimidine metabolism; dTTP biosynthesis. Catalyzes the reductive methylation of 2'-deoxyuridine-5'-monophosphate (dUMP) to 2'-deoxythymidine-5'-monophosphate (dTMP) while utilizing 5,10-methylenetetrahydrofolate (mTHF) as the methyl donor and reductant in the reaction, yielding dihydrofolate (DHF) as a by-product. This enzymatic reaction provides an intracellular de novo source of dTMP, an essential precursor for DNA biosynthesis. The polypeptide is Thymidylate synthase (Shewanella sediminis (strain HAW-EB3)).